The chain runs to 100 residues: Large ribosomal subunit protein uL23 (100 aa).

The protein belongs to the universal ribosomal protein uL23 family. Part of the 50S ribosomal subunit. Contacts protein L29, and trigger factor when it is bound to the ribosome.

In terms of biological role, one of the early assembly proteins it binds 23S rRNA. One of the proteins that surrounds the polypeptide exit tunnel on the outside of the ribosome. Forms the main docking site for trigger factor binding to the ribosome. This Mycolicibacterium paratuberculosis (strain ATCC BAA-968 / K-10) (Mycobacterium paratuberculosis) protein is Large ribosomal subunit protein uL23.